The following is a 386-amino-acid chain: DNA methyltransferase CcrM (386 aa).

The RAMA domain maps to 280–382 (LGKAELTVMT…LRKIIREQMA (103 aa)).

The protein belongs to the N(4)/N(6)-methyltransferase family.

It catalyses the reaction a 2'-deoxyadenosine in DNA + S-adenosyl-L-methionine = an N(6)-methyl-2'-deoxyadenosine in DNA + S-adenosyl-L-homocysteine + H(+). Functionally, a beta subtype methylase that recognizes the double-stranded sequence 5'-GANTC-3' and methylates A-2 on both strands. CcrM-mediated methylation has important cellular functions. Contributes to the accurate cell-cycle control of DNA replication and cellular morphology. The chain is DNA methyltransferase CcrM (ccrM) from Brucella ovis (strain ATCC 25840 / 63/290 / NCTC 10512).